The chain runs to 615 residues: Proteasome-associated ATPase (615 aa).

The span at 1–13 shows a compositional bias: basic and acidic residues; sequence MSESQRHEAREDG. The interval 1–32 is disordered; it reads MSESQRHEAREDGFTTPHESGLSSEDAAELEE. Positions 22–100 form a coiled coil; it reads LSSEDAAELE…LREEVDRLGQ (79 aa). 302 to 307 serves as a coordination point for ATP; it reads GCGKTL. The docks into pockets in the proteasome alpha-ring stretch occupies residues 614–615; that stretch reads YL.

Belongs to the AAA ATPase family. As to quaternary structure, homohexamer. Assembles into a hexameric ring structure that caps the 20S proteasome core. Strongly interacts with the prokaryotic ubiquitin-like protein Pup through a hydrophobic interface; the interacting region of ARC lies in its N-terminal coiled-coil domain. There is one Pup binding site per ARC hexamer ring. Upon ATP-binding, the C-terminus of ARC interacts with the alpha-rings of the proteasome core, possibly by binding to the intersubunit pockets.

Its pathway is protein degradation; proteasomal Pup-dependent pathway. Its function is as follows. ATPase which is responsible for recognizing, binding, unfolding and translocation of pupylated proteins into the bacterial 20S proteasome core particle. May be essential for opening the gate of the 20S proteasome via an interaction with its C-terminus, thereby allowing substrate entry and access to the site of proteolysis. Thus, the C-termini of the proteasomal ATPase may function like a 'key in a lock' to induce gate opening and therefore regulate proteolysis. The polypeptide is Proteasome-associated ATPase (Mycobacterium sp. (strain JLS)).